The primary structure comprises 880 residues: DNA mismatch repair protein MutS (880 aa).

631–638 (GPNMAGKS) is a binding site for ATP. A disordered region spans residues 835–860 (RAAPPPPAPAAPKTSPVEERLREIQP). Positions 850–860 (PVEERLREIQP) are enriched in basic and acidic residues.

It belongs to the DNA mismatch repair MutS family.

In terms of biological role, this protein is involved in the repair of mismatches in DNA. It is possible that it carries out the mismatch recognition step. This protein has a weak ATPase activity. The polypeptide is DNA mismatch repair protein MutS (Cereibacter sphaeroides (strain ATCC 17029 / ATH 2.4.9) (Rhodobacter sphaeroides)).